We begin with the raw amino-acid sequence, 731 residues long: 1,4-alpha-glucan branching enzyme GlgB (731 aa).

D409 (nucleophile) is an active-site residue. E462 acts as the Proton donor in catalysis.

Belongs to the glycosyl hydrolase 13 family. GlgB subfamily. Monomer.

The enzyme catalyses Transfers a segment of a (1-&gt;4)-alpha-D-glucan chain to a primary hydroxy group in a similar glucan chain.. It participates in glycan biosynthesis; glycogen biosynthesis. In terms of biological role, catalyzes the formation of the alpha-1,6-glucosidic linkages in glycogen by scission of a 1,4-alpha-linked oligosaccharide from growing alpha-1,4-glucan chains and the subsequent attachment of the oligosaccharide to the alpha-1,6 position. In Roseobacter denitrificans (strain ATCC 33942 / OCh 114) (Erythrobacter sp. (strain OCh 114)), this protein is 1,4-alpha-glucan branching enzyme GlgB.